The chain runs to 414 residues: MISSAVILVGGPSRGTRFRPLSFDVPKPLFKIGGREMIYHHLAALSKIESVKDVFLVGFYDESVFKDFINEVASHFPSFNRIKYLREYNCLGTGGGLYHFRDQILKGHTSNVFVMHADVCCSFPLQELLNVHHEKKALVTLMATKVSKEDASNFGCLVEEPSTGRVLHYVDKPSSYLSNIISCGIYIFDASIFDEIKKAYERRLEEVEKQLRSLDEGMEDYLSLETDVLAPLCSDSSKAIYAYNTPEFWRQIKTAGSAVPANSLYLQKAYHDGTLPKPDTEAEIIQPVFIHPNAIVSKGAKIGPNVSIGARVRIEDGARIRNSIIQEDCEISANAVVLHSILSRHCKIGKWSRVEGSPTLPSQHSTTIMRNSVKVQAITVMGADCIVHDEVRVQNCLVLPHKEIKVGLVGEIVM.

It belongs to the transferase hexapeptide repeat family.

The protein localises to the cytoplasm. It localises to the nucleus. It catalyses the reaction alpha-D-mannose 1-phosphate + GTP + H(+) = GDP-alpha-D-mannose + diphosphate. It functions in the pathway nucleotide-sugar biosynthesis; GDP-alpha-D-mannose biosynthesis; GDP-alpha-D-mannose from alpha-D-mannose 1-phosphate (GTP route): step 1/1. Functionally, involved in cell wall synthesis where it is required for glycosylation. This is Probable mannose-1-phosphate guanyltransferase from Schizosaccharomyces pombe (strain 972 / ATCC 24843) (Fission yeast).